Here is a 247-residue protein sequence, read N- to C-terminus: Transmembrane protein 69 (247 aa).

The next 5 membrane-spanning stretches (helical) occupy residues 97-117 (ALCVTLAGLIPFVAPPLVMLM), 122-142 (IPILAFTQMAYGASFLSFLGG), 159-179 (YLNLASSAAPLFFSWFAFLIS), 185-205 (AIVTVIMGMGVAFHLELFLLP), and 216-236 (IVVTLLATFSFIITLVVKSSF).

The protein localises to the membrane. In Homo sapiens (Human), this protein is Transmembrane protein 69 (TMEM69).